Reading from the N-terminus, the 444-residue chain is Spermidine/putrescine import ATP-binding protein PotA (444 aa).

The ABC transporter domain maps to 11–332 (ISLVDVDKEF…PVNKWVANFI (322 aa)). Position 43-50 (43-50 (GPSGSGKT)) interacts with ATP. Positions 111-201 (RIKKKAEEIP…ESFKKKYLTR (91 aa)) are insert.

It belongs to the ABC transporter superfamily. Spermidine/putrescine importer (TC 3.A.1.11.1) family. As to quaternary structure, the complex is composed of two ATP-binding proteins (PotA), two transmembrane proteins (PotB and PotC) and a solute-binding protein (PotD).

It is found in the cell membrane. It catalyses the reaction ATP + H2O + polyamine-[polyamine-binding protein]Side 1 = ADP + phosphate + polyamineSide 2 + [polyamine-binding protein]Side 1.. In terms of biological role, part of the ABC transporter complex PotABCD involved in spermidine/putrescine import. Responsible for energy coupling to the transport system. This is Spermidine/putrescine import ATP-binding protein PotA from Mesomycoplasma hyopneumoniae (strain 232) (Mycoplasma hyopneumoniae).